A 34-amino-acid polypeptide reads, in one-letter code: Photosystem II reaction center protein M (34 aa).

A helical membrane pass occupies residues 7–27; the sequence is GFIATILFVLVPTVFLLILYI.

The protein belongs to the PsbM family. As to quaternary structure, PSII is composed of 1 copy each of membrane proteins PsbA, PsbB, PsbC, PsbD, PsbE, PsbF, PsbH, PsbI, PsbJ, PsbK, PsbL, PsbM, PsbT, PsbX, PsbY, PsbZ, Psb30/Ycf12, peripheral proteins PsbO, CyanoQ (PsbQ), PsbU, PsbV and a large number of cofactors. It forms dimeric complexes.

It is found in the cellular thylakoid membrane. Functionally, one of the components of the core complex of photosystem II (PSII). PSII is a light-driven water:plastoquinone oxidoreductase that uses light energy to abstract electrons from H(2)O, generating O(2) and a proton gradient subsequently used for ATP formation. It consists of a core antenna complex that captures photons, and an electron transfer chain that converts photonic excitation into a charge separation. This subunit is found at the monomer-monomer interface. This Picosynechococcus sp. (strain ATCC 27264 / PCC 7002 / PR-6) (Agmenellum quadruplicatum) protein is Photosystem II reaction center protein M.